A 492-amino-acid chain; its full sequence is Trehalose-6-phosphate synthase (492 aa).

Residue R25 participates in D-glucose 6-phosphate binding. 45–46 (GG) is a UDP-alpha-D-glucose binding site. D-glucose 6-phosphate contacts are provided by Y101 and D155. UDP-alpha-D-glucose is bound by residues R297 and K302. R335 provides a ligand contact to D-glucose 6-phosphate. 400-404 (LVAKE) serves as a coordination point for UDP-alpha-D-glucose.

The protein belongs to the glycosyltransferase 20 family. As to quaternary structure, homotetramer.

The catalysed reaction is ADP-alpha-D-glucose + D-glucose 6-phosphate = alpha,alpha-trehalose 6-phosphate + ADP + H(+). The enzyme catalyses CDP-alpha-D-glucose + D-glucose 6-phosphate = alpha,alpha-trehalose 6-phosphate + CDP + H(+). It carries out the reaction GDP-alpha-D-glucose + D-glucose 6-phosphate = alpha,alpha-trehalose 6-phosphate + GDP + H(+). It catalyses the reaction TDP-alpha-D-glucose + D-glucose 6-phosphate = 5-methyl-UDP + alpha,alpha-trehalose 6-phosphate + H(+). The catalysed reaction is D-glucose 6-phosphate + UDP-alpha-D-glucose = alpha,alpha-trehalose 6-phosphate + UDP + H(+). The protein operates within glycan biosynthesis; trehalose biosynthesis. In terms of biological role, probably involved in the osmoprotection via the biosynthesis of trehalose and in the production of glycogen and alpha-glucan via the TreS-Pep2 branch involved in the biosynthesis of maltose-1-phosphate (M1P). Catalyzes the transfer of glucose from UDP-glucose (UDP-Glc) to D-glucose 6-phosphate (Glc-6-P) to form trehalose-6-phosphate. Probably also able to use ADP-Glc, CDP-Glc, GDP-Glc and TDP-Glc as glucosyl donors. The polypeptide is Trehalose-6-phosphate synthase (Mycolicibacterium paratuberculosis (strain ATCC BAA-968 / K-10) (Mycobacterium paratuberculosis)).